Consider the following 177-residue polypeptide: B-phycoerythrin beta chain (177 aa).

Residues C50 and C61 each coordinate phycourobilin. N4-methylasparagine is present on N72. (2R,3E)-phycoerythrobilin-binding residues include C82 and C158.

It belongs to the phycobiliprotein family. In terms of assembly, heteromer of 6 alpha, 6 beta and one gamma chain. Contains two covalently linked phycoerythrobilin chromophores and one covalently linked phycourobilin chromophore.

Its subcellular location is the plastid. The protein localises to the chloroplast thylakoid membrane. Functionally, light-harvesting photosynthetic bile pigment-protein from the phycobiliprotein complex. This chain is B-phycoerythrin beta chain (cpeB), found in Porphyridium sordidum (Red alga).